The primary structure comprises 82 residues: Sec-independent protein translocase protein TatA (82 aa).

The helical transmembrane segment at methionine 1–glycine 21 threads the bilayer. The segment at lysine 41–alanine 82 is disordered. Over residues alanine 42–alanine 82 the composition is skewed to basic and acidic residues.

This sequence belongs to the TatA/E family. As to quaternary structure, the Tat system comprises two distinct complexes: a TatABC complex, containing multiple copies of TatA, TatB and TatC subunits, and a separate TatA complex, containing only TatA subunits. Substrates initially bind to the TatABC complex, which probably triggers association of the separate TatA complex to form the active translocon.

The protein resides in the cell inner membrane. In terms of biological role, part of the twin-arginine translocation (Tat) system that transports large folded proteins containing a characteristic twin-arginine motif in their signal peptide across membranes. TatA could form the protein-conducting channel of the Tat system. The polypeptide is Sec-independent protein translocase protein TatA (Vibrio campbellii (strain ATCC BAA-1116)).